Consider the following 1350-residue polypeptide: Nidogen (1350 aa).

The N-terminal stretch at 1–22 is a signal peptide; that stretch reads MPTFGSKLLACLLLSSVILVSG. One can recognise an NIDO domain in the interval 107–260; the sequence is AFYSNVDTSF…GVWLFEVAPI (154 aa). Asparagine 231 is a glycosylation site (N-linked (GlcNAc...) asparagine). The 41-residue stretch at 281–321 folds into the EGF-like 1 domain; sequence LALSCQAHAHQCHEKAECHDKAEGYCCVCGSGFYGNGKSCL. 3 cysteine pairs are disulfide-bonded: cysteine 285/cysteine 298, cysteine 292/cysteine 307, and cysteine 309/cysteine 320. The Nidogen G2 beta-barrel domain occupies 325 to 550; it reads QPIRVTGTLT…GVTPESNACN (226 aa). Residues asparagine 423 and asparagine 480 are each glycosylated (N-linked (GlcNAc...) asparagine). The EGF-like 2 domain occupies 545-583; the sequence is ESNACNDGTADCVENSVCVPYEDTYRCDCYHGFAAQLDE. Intrachain disulfides connect cysteine 549/cysteine 562, cysteine 556/cysteine 571, cysteine 595/cysteine 608, cysteine 602/cysteine 617, and cysteine 619/cysteine 630. The EGF-like 3; calcium-binding domain maps to 591–631; that stretch reads DIDECATGSHVCDENAVCDNTEGGFNCYCTEGFEGNGYRCL. Asparagine 633 carries an N-linked (GlcNAc...) asparagine glycan. The tract at residues 645-691 is disordered; it reads VEGQAEPTSEPSPNPSPYPDQGQDQEREREDDQYPQPNPYPYPEEQI. EGF-like domains lie at 788–829, 832–874, 912–953, 955–996, and 997–1037; these read DLIP…YNCD, SDDS…FNCQ, PAGR…TGCT, KPLS…YVCI, and EEQN…SLCQ. Disulfide bonds link cysteine 792-cysteine 804, cysteine 798-cysteine 815, cysteine 817-cysteine 828, cysteine 836-cysteine 849, cysteine 843-cysteine 860, cysteine 862-cysteine 873, cysteine 916-cysteine 927, cysteine 921-cysteine 938, cysteine 940-cysteine 952, cysteine 959-cysteine 971, cysteine 965-cysteine 982, cysteine 984-cysteine 995, cysteine 1001-cysteine 1014, cysteine 1008-cysteine 1023, and cysteine 1025-cysteine 1036. N-linked (GlcNAc...) asparagine glycosylation occurs at asparagine 801. Asparagine 1032 carries N-linked (GlcNAc...) asparagine glycosylation. LDL-receptor class B repeat units lie at residues 1084–1126, 1127–1170, 1171–1216, and 1257–1282; these read GRVY…DVIS, RRLY…DPYR, EKLF…LENS, and DQFY…QTPI.

Expressed in the basement membrane around the follicular epithelium of the adult ovary (at protein level).

Its subcellular location is the secreted. It is found in the extracellular space. The protein resides in the extracellular matrix. It localises to the basement membrane. Cell adhesion glycoprotein which is widely distributed in basement membranes. Involved in cell-extracellular matrix (ECM) interactions probably by connecting the laminin and collagen IV networks. Required for permeability and mechanical stability of basement membranes, and ECM dependent neural plasticity. Not involved in assembly of the embryonic basement membrane. The protein is Nidogen of Drosophila melanogaster (Fruit fly).